A 444-amino-acid chain; its full sequence is 23S rRNA (uracil(1939)-C(5))-methyltransferase RlmD (444 aa).

A TRAM domain is found at 5-64 (KPKLNLTSQTARIVNLSHDGRGIARINGKATFIQGALPGEVVEFQYTRVKKDFDEGKLLS). Residues C77, C83, C86, and C166 each coordinate [4Fe-4S] cluster. The S-adenosyl-L-methionine site is built by Q276, F305, N310, E326, N353, and D374. C400 functions as the Nucleophile in the catalytic mechanism.

It belongs to the class I-like SAM-binding methyltransferase superfamily. RNA M5U methyltransferase family. RlmD subfamily.

It carries out the reaction uridine(1939) in 23S rRNA + S-adenosyl-L-methionine = 5-methyluridine(1939) in 23S rRNA + S-adenosyl-L-homocysteine + H(+). Functionally, catalyzes the formation of 5-methyl-uridine at position 1939 (m5U1939) in 23S rRNA. In Legionella pneumophila (strain Lens), this protein is 23S rRNA (uracil(1939)-C(5))-methyltransferase RlmD.